The chain runs to 408 residues: Peptidoglycan muramidase Tse3 (408 aa).

Residues asparagine 181, aspartate 253, glutamine 254, glutamate 258, glutamate 375, serine 378, arginine 379, aspartate 382, and asparagine 384 each contribute to the Ca(2+) site.

As to quaternary structure, forms a heterotetramer with Tsi3 consisting of two Tse3 dimers and two Tsi3 dimers. Formation of the complex inactivates Tse3 enzymatic activity. Requires Ca(2+) as cofactor.

The protein localises to the host membrane. It is found in the secreted. The catalysed reaction is Hydrolysis of (1-&gt;4)-beta-linkages between N-acetylmuramic acid and N-acetyl-D-glucosamine residues in a peptidoglycan and between N-acetyl-D-glucosamine residues in chitodextrins.. Enzymatic activity depends on membrane binding. Toxin secreted by the H1 type VI (H1-T6SS) secretion system into the periplasm of recipient cells. Degrades peptidoglycan via muramidase activity thereby helping itself to compete with other bacteria. To protect itself, the bacterium synthesizes immunity protein Tsi3 that specifically interacts with and inactivates cognate toxin. The sequence is that of Peptidoglycan muramidase Tse3 from Pseudomonas aeruginosa (strain ATCC 15692 / DSM 22644 / CIP 104116 / JCM 14847 / LMG 12228 / 1C / PRS 101 / PAO1).